Here is a 594-residue protein sequence, read N- to C-terminus: Alpha-1,4-glucan:maltose-1-phosphate maltosyltransferase (594 aa).

The disordered stretch occupies residues 244–270 (NRKGRNNSLTPGPDDPGSPYAIGSEEG). 3 residues coordinate alpha-maltose 1-phosphate: Lys-246, Gln-306, and Asp-341. Asp-377 functions as the Nucleophile in the catalytic mechanism. Position 378 (Asn-378) interacts with alpha-maltose 1-phosphate. Glu-406 serves as the catalytic Proton donor. 517 to 518 (KY) provides a ligand contact to alpha-maltose 1-phosphate.

This sequence belongs to the glycosyl hydrolase 13 family. GlgE subfamily. In terms of assembly, homodimer.

It catalyses the reaction alpha-maltose 1-phosphate + [(1-&gt;4)-alpha-D-glucosyl](n) = [(1-&gt;4)-alpha-D-glucosyl](n+2) + phosphate. In terms of biological role, maltosyltransferase that uses maltose 1-phosphate (M1P) as the sugar donor to elongate linear or branched alpha-(1-&gt;4)-glucans. Is involved in a branched alpha-glucan biosynthetic pathway from trehalose, together with TreS, Mak and GlgB. This Cereibacter sphaeroides (Rhodobacter sphaeroides) protein is Alpha-1,4-glucan:maltose-1-phosphate maltosyltransferase.